Reading from the N-terminus, the 126-residue chain is Small ribosomal subunit protein eS6 (126 aa).

The protein belongs to the eukaryotic ribosomal protein eS6 family.

In Methanothermobacter thermautotrophicus (strain ATCC 29096 / DSM 1053 / JCM 10044 / NBRC 100330 / Delta H) (Methanobacterium thermoautotrophicum), this protein is Small ribosomal subunit protein eS6.